Reading from the N-terminus, the 103-residue chain is MKATIRFIKISPTKVRRITNQIKGLKYADACILLKFMKGRIAKTILKLVNSAFSNSRYSTFADLRIQTVLVEKGPIFNRFQPRAKGRAYPIKKYTSHIKVVLS.

The protein belongs to the universal ribosomal protein uL22 family. As to quaternary structure, part of the 50S ribosomal subunit.

The protein resides in the plastid. It is found in the chloroplast. Functionally, this protein binds specifically to 23S rRNA. In terms of biological role, the globular domain of the protein is located near the polypeptide exit tunnel on the outside of the subunit, while an extended beta-hairpin is found that lines the wall of the exit tunnel in the center of the 70S ribosome. The polypeptide is Large ribosomal subunit protein uL22c (rpl22) (Cyanidium caldarium (Red alga)).